The primary structure comprises 201 residues: uncharacterized protein (201 aa).

2 coiled-coil regions span residues 3-43 (YMDD…EVYK) and 76-120 (TGQV…AKTK).

This is an uncharacterized protein from Archaeoglobus fulgidus (strain ATCC 49558 / DSM 4304 / JCM 9628 / NBRC 100126 / VC-16).